We begin with the raw amino-acid sequence, 223 residues long: Thiamine-phosphate synthase (223 aa).

Residues glutamine 37 to lysine 41 and aspartate 72 each bind 4-amino-2-methyl-5-(diphosphooxymethyl)pyrimidine. Positions 73 and 92 each coordinate Mg(2+). A 4-amino-2-methyl-5-(diphosphooxymethyl)pyrimidine-binding site is contributed by serine 110. A 2-[(2R,5Z)-2-carboxy-4-methylthiazol-5(2H)-ylidene]ethyl phosphate-binding site is contributed by threonine 136–serine 138. Lysine 139 serves as a coordination point for 4-amino-2-methyl-5-(diphosphooxymethyl)pyrimidine. 2-[(2R,5Z)-2-carboxy-4-methylthiazol-5(2H)-ylidene]ethyl phosphate-binding positions include glycine 168 and isoleucine 188–serine 189.

It belongs to the thiamine-phosphate synthase family. Mg(2+) is required as a cofactor.

It carries out the reaction 2-[(2R,5Z)-2-carboxy-4-methylthiazol-5(2H)-ylidene]ethyl phosphate + 4-amino-2-methyl-5-(diphosphooxymethyl)pyrimidine + 2 H(+) = thiamine phosphate + CO2 + diphosphate. The enzyme catalyses 2-(2-carboxy-4-methylthiazol-5-yl)ethyl phosphate + 4-amino-2-methyl-5-(diphosphooxymethyl)pyrimidine + 2 H(+) = thiamine phosphate + CO2 + diphosphate. The catalysed reaction is 4-methyl-5-(2-phosphooxyethyl)-thiazole + 4-amino-2-methyl-5-(diphosphooxymethyl)pyrimidine + H(+) = thiamine phosphate + diphosphate. The protein operates within cofactor biosynthesis; thiamine diphosphate biosynthesis; thiamine phosphate from 4-amino-2-methyl-5-diphosphomethylpyrimidine and 4-methyl-5-(2-phosphoethyl)-thiazole: step 1/1. In terms of biological role, condenses 4-methyl-5-(beta-hydroxyethyl)thiazole monophosphate (THZ-P) and 2-methyl-4-amino-5-hydroxymethyl pyrimidine pyrophosphate (HMP-PP) to form thiamine monophosphate (TMP). The chain is Thiamine-phosphate synthase from Streptococcus agalactiae serotype III (strain NEM316).